An 89-amino-acid polypeptide reads, in one-letter code: Small ribosomal subunit protein uS15 (89 aa).

This sequence belongs to the universal ribosomal protein uS15 family. As to quaternary structure, part of the 30S ribosomal subunit. Forms a bridge to the 50S subunit in the 70S ribosome, contacting the 23S rRNA.

In terms of biological role, one of the primary rRNA binding proteins, it binds directly to 16S rRNA where it helps nucleate assembly of the platform of the 30S subunit by binding and bridging several RNA helices of the 16S rRNA. Its function is as follows. Forms an intersubunit bridge (bridge B4) with the 23S rRNA of the 50S subunit in the ribosome. This Rhizobium johnstonii (strain DSM 114642 / LMG 32736 / 3841) (Rhizobium leguminosarum bv. viciae) protein is Small ribosomal subunit protein uS15.